Reading from the N-terminus, the 271-residue chain is Glutamate racemase (271 aa).

Residues 12–13 (DS) and 44–45 (YG) each bind substrate. The active-site Proton donor/acceptor is C75. 76–77 (NS) provides a ligand contact to substrate. C185 (proton donor/acceptor) is an active-site residue. 186-187 (TH) serves as a coordination point for substrate.

This sequence belongs to the aspartate/glutamate racemases family.

It carries out the reaction L-glutamate = D-glutamate. It functions in the pathway cell wall biogenesis; peptidoglycan biosynthesis. Provides the (R)-glutamate required for cell wall biosynthesis. The chain is Glutamate racemase from Mycobacterium bovis (strain BCG / Pasteur 1173P2).